We begin with the raw amino-acid sequence, 306 residues long: Homoserine kinase (306 aa).

Pro-84–Ala-94 serves as a coordination point for ATP.

This sequence belongs to the GHMP kinase family. Homoserine kinase subfamily.

It is found in the cytoplasm. It catalyses the reaction L-homoserine + ATP = O-phospho-L-homoserine + ADP + H(+). Its pathway is amino-acid biosynthesis; L-threonine biosynthesis; L-threonine from L-aspartate: step 4/5. Its function is as follows. Catalyzes the ATP-dependent phosphorylation of L-homoserine to L-homoserine phosphate. In Sulfurisphaera tokodaii (strain DSM 16993 / JCM 10545 / NBRC 100140 / 7) (Sulfolobus tokodaii), this protein is Homoserine kinase.